We begin with the raw amino-acid sequence, 32 residues long: Dermaseptin-L1 (32 aa).

In terms of tissue distribution, expressed by the skin glands.

It localises to the secreted. In terms of biological role, antimicrobial peptide active against the Gram-negative bacterium E.coli (MIC=8 uM) but inactive against the Gram-positive bacterium S.aureus. Also inhibits growth of zoospores of the chytrid fungus B.dendrobatidis at high concentrations (above 25 uM). Shows anticancer activities since it is cytolytic against HepG2 human hepatoma-derived cells (LC(50)=45 uM). Is only weakly hemolytic on human erythrocytes. The protein is Dermaseptin-L1 of Agalychnis lemur (Lemur leaf frog).